A 357-amino-acid chain; its full sequence is Membrane-bound lytic murein transglycosylase C (357 aa).

Positions 1 to 15 (MKKYLLLALLPFLYA) are cleaved as a signal peptide. A lipid anchor (N-palmitoyl cysteine) is attached at C16. Residue C16 is the site of S-diacylglycerol cysteine attachment.

Belongs to the transglycosylase Slt family.

It is found in the cell outer membrane. The enzyme catalyses Exolytic cleavage of the (1-&gt;4)-beta-glycosidic linkage between N-acetylmuramic acid (MurNAc) and N-acetylglucosamine (GlcNAc) residues in peptidoglycan, from either the reducing or the non-reducing ends of the peptidoglycan chains, with concomitant formation of a 1,6-anhydrobond in the MurNAc residue.. Functionally, murein-degrading enzyme. May play a role in recycling of muropeptides during cell elongation and/or cell division. This Haemophilus influenzae (strain PittGG) protein is Membrane-bound lytic murein transglycosylase C.